The chain runs to 109 residues: UPF0060 membrane protein YfjF (109 aa).

A run of 4 helical transmembrane segments spans residues 6-26 (ILLFLAAGLAEIGGGYLVWLW), 32-52 (PAGYGIAGALILIVYGILPTF), 61-81 (VYAAYGGVFIVLAVLWGWLVD), and 87-107 (LYDWIGAFICLIGVCVILFAP).

Belongs to the UPF0060 family.

It localises to the cell membrane. The sequence is that of UPF0060 membrane protein YfjF (yfjF) from Bacillus subtilis (strain 168).